A 119-amino-acid polypeptide reads, in one-letter code: Large ribosomal subunit protein bL20 (119 aa).

This sequence belongs to the bacterial ribosomal protein bL20 family.

Functionally, binds directly to 23S ribosomal RNA and is necessary for the in vitro assembly process of the 50S ribosomal subunit. It is not involved in the protein synthesizing functions of that subunit. This is Large ribosomal subunit protein bL20 from Shewanella halifaxensis (strain HAW-EB4).